We begin with the raw amino-acid sequence, 541 residues long: Glucose-6-phosphate isomerase (541 aa).

Glutamate 354 serves as the catalytic Proton donor. Active-site residues include histidine 385 and lysine 505.

This sequence belongs to the GPI family.

Its subcellular location is the cytoplasm. It catalyses the reaction alpha-D-glucose 6-phosphate = beta-D-fructose 6-phosphate. Its pathway is carbohydrate biosynthesis; gluconeogenesis. The protein operates within carbohydrate degradation; glycolysis; D-glyceraldehyde 3-phosphate and glycerone phosphate from D-glucose: step 2/4. In terms of biological role, catalyzes the reversible isomerization of glucose-6-phosphate to fructose-6-phosphate. The sequence is that of Glucose-6-phosphate isomerase from Cupriavidus metallidurans (strain ATCC 43123 / DSM 2839 / NBRC 102507 / CH34) (Ralstonia metallidurans).